The chain runs to 350 residues: MSEVQLRNNWKREEIESLFALPMNDLLFQAHSIHRQEFDPNEVQISRLLSIKTGACPEDCKYCPQSARYDTGLEKERLLAMETVLTEARSAKAAGASRFCMGAAWRNPKERDMPYLKTMVEEVKALGMETCMTLGMLSAEQANTLADAGLDYYNHNLDTSPEYYGDVITTRTYQSRLDTLSNVRASGMKVCSGGIVGMGEKATDRAGLIQQLANLDQHPDSVPINMLVKVEGTPFEKLDDLDPLEFVRTIAVARITMPKSRVRLSAGRENMSDELQAMCFFAGANSIFYGCKLLTTPNPEENDDMGLFRRLGLHPEQGVASTKEQDEAMLAKAAAQQDKKVSAFYDAGAL.

Residues 41–268 form the Radical SAM core domain; it reads NEVQISRLLS…KSRVRLSAGR (228 aa). [4Fe-4S] cluster is bound by residues Cys56, Cys60, and Cys63. Residues Cys100, Cys131, Cys191, and Arg263 each coordinate [2Fe-2S] cluster.

It belongs to the radical SAM superfamily. Biotin synthase family. As to quaternary structure, homodimer. It depends on [4Fe-4S] cluster as a cofactor. The cofactor is [2Fe-2S] cluster.

The catalysed reaction is (4R,5S)-dethiobiotin + (sulfur carrier)-SH + 2 reduced [2Fe-2S]-[ferredoxin] + 2 S-adenosyl-L-methionine = (sulfur carrier)-H + biotin + 2 5'-deoxyadenosine + 2 L-methionine + 2 oxidized [2Fe-2S]-[ferredoxin]. It participates in cofactor biosynthesis; biotin biosynthesis; biotin from 7,8-diaminononanoate: step 2/2. In terms of biological role, catalyzes the conversion of dethiobiotin (DTB) to biotin by the insertion of a sulfur atom into dethiobiotin via a radical-based mechanism. The chain is Biotin synthase from Shewanella halifaxensis (strain HAW-EB4).